Reading from the N-terminus, the 160-residue chain is Negative modulator of initiation of replication (160 aa).

It belongs to the SeqA family. As to quaternary structure, homodimer. Polymerizes to form helical filaments.

The protein resides in the cytoplasm. Negative regulator of replication initiation, which contributes to regulation of DNA replication and ensures that replication initiation occurs exactly once per chromosome per cell cycle. Binds to pairs of hemimethylated GATC sequences in the oriC region, thus preventing assembly of replication proteins and re-initiation at newly replicated origins. Repression is relieved when the region becomes fully methylated. The polypeptide is Negative modulator of initiation of replication (Idiomarina loihiensis (strain ATCC BAA-735 / DSM 15497 / L2-TR)).